A 471-amino-acid chain; its full sequence is MEFVTALVNLQEESSCPICLEYLKDPVTINCGHNFCRSCLSVSWKDLDDTFPCPVCRFCFPYKSFRRNPQLRNLTEIAKQLQIRRSKRKRQKENAMCEKHNQFLTLFCVKDLEILCTQCSFSTKHQKHYICPIKKAASYHREILEGSLEPLRNNIERVEKVIILQGSKSVELKKKVEYKREEINSEFEQIRLFLQNEQEMILRQIQDEEMNILAKLNENLVELSDYVSTLKHLLREVEGKSVQSNLELLTQAKSMHHKYQNLKCPELFSFRLTKYGFSLPPQYSGLDRIIKPFQVDVILDLNTAHPQLLVSEDRKAVRYERKKRNICYDPRRFYVCPAVLGSQRFSSGRHYWEVEVGNKPKWILGVCQDCLLRNWQDQPSVLGGFWAIGRYMKSGYVASGPKTTQLLPVVKPSKIGIFLDYELGDLSFYNMNDRSILYTFNDCFTEAVWPYFYTGTDSEPLKICSVSDSER.

Residues Cys16 to Arg57 form an RING-type zinc finger. Residues Lys92–Ile133 form a B box-type zinc finger. Residues Cys97, His100, Cys119, and His125 each contribute to the Zn(2+) site. The stretch at Glu171–Leu223 forms a coiled coil. The B30.2/SPRY domain occupies Phe277–Glu470.

The protein belongs to the TRIM/RBCC family.

Functionally, E3 SUMO-protein ligase that mediates SUMOylation of TAB2 leading to inhibition of NF-kappa-B and MAPK pathways by suppressing the TRAF6/TAB2/TAK1 complex. The polypeptide is Tripartite motif-containing protein 60 (TRIM60) (Homo sapiens (Human)).